We begin with the raw amino-acid sequence, 798 residues long: Gelsolin (798 aa).

Positions 1–28 are cleaved as a signal peptide; sequence MDASGAATMAVLSSLLVFLALSSSLCSA. The interval 57–181 is actin-severing; the sequence is RVMHPSFANA…YEQGGVGTGF (125 aa). One copy of the Gelsolin-like 1 repeat lies at 78-131; the sequence is ENFEPVIYPKTNYGKFYTGDSFIVLNTIENKKDKKLSWDVHFWLGLETSTDEAG. Y90 carries the post-translational modification Phosphotyrosine; by SRC. The segment at 128 to 131 is actin-actin interfilament contact point; sequence DEAG. A 1,2-diacyl-sn-glycero-3-phospho-(1D-myo-inositol-4,5-bisphosphate)-binding positions include 167 to 174 and 193 to 201; these read KNGIRYEQ and RLFQVKGKR. Gelsolin-like repeat units lie at residues 203-243, 322-365, 474-524, and 583-625; these read VRVR…VEKL, LKVD…KEKT, IVVS…AARK, and VHAS…FEKQ. The actin-binding, Ca-sensitive stretch occupies residues 451-792; that stretch reads MPDHGQNVIE…SYEDMKQLVI (342 aa). D599 serves as a coordination point for Ca(2+). At Y612 the chain carries Phosphotyrosine; by SRC. E623 provides a ligand contact to Ca(2+). Y662 bears the Phosphotyrosine; by SRC mark. Residues 689-730 form a Gelsolin-like 6 repeat; sequence LKVEEVAQYEQEDLDSDDIMLLDAGDEIYLWVGYGVSEEENG. Ca(2+)-binding residues include D705, D706, and E728.

This sequence belongs to the villin/gelsolin family. As to quaternary structure, binds to actin and to fibronectin. Isoform 1 and isoform 2 are ubiquitously expressed in early embryo. Isoform 1 is expressed in the fat body, and is abundant in hemolymph. Isoform 2 is expressed in parts of the gut.

It is found in the cytoplasm. Its subcellular location is the cytoskeleton. The protein resides in the secreted. Functionally, calcium-regulated, actin-modulating protein that binds to the plus (or barbed) ends of actin monomers or filaments, preventing monomer exchange (end-blocking or capping). It can promote the assembly of monomers into filaments (nucleation) as well as sever filaments already formed. The chain is Gelsolin (Gel) from Drosophila melanogaster (Fruit fly).